The following is a 367-amino-acid chain: Testis-specific serine/threonine-protein kinase 1 (367 aa).

Residues 12-272 (YLLGINLGEG…IDEILSHCWM (261 aa)) enclose the Protein kinase domain. Residues 18-26 (LGEGSYAKV) and Lys41 contribute to the ATP site. Asp136 (proton acceptor) is an active-site residue. Thr174 is modified (phosphothreonine). The disordered stretch occupies residues 276 to 367 (ARGSPSVAIN…PQQPPETRAQ (92 aa)). Residues 303–314 (GSDKKSATKLEP) are compositionally biased toward basic and acidic residues.

This sequence belongs to the protein kinase superfamily. CAMK Ser/Thr protein kinase family. In terms of assembly, interacts with TSSK2. Interacts with HSP90; this interaction stabilizes TSSK1. Mg(2+) serves as cofactor. Autophosphorylated. In terms of processing, ubiquitinated; HSP90 activity negatively regulates ubiquitination and degradation. Testis-specific. Present in sperm (at protein level).

It is found in the cytoplasm. The protein resides in the cytoplasmic vesicle. Its subcellular location is the secretory vesicle. The protein localises to the acrosome. It localises to the cell projection. It is found in the cilium. The protein resides in the flagellum. It catalyses the reaction L-seryl-[protein] + ATP = O-phospho-L-seryl-[protein] + ADP + H(+). It carries out the reaction L-threonyl-[protein] + ATP = O-phospho-L-threonyl-[protein] + ADP + H(+). With respect to regulation, kinase activity is specifically inhibited by 2 classes of compounds: biphenyl compounds (1,1'-(biphenyl-4,4'-diyl)bis(2,2-dihydroxyethanone)) and 1,2,7-trialky-1H-imidazo[4,5-g]quinoxalin-6-one. Activated by phosphorylation on Thr-174 and potentially by autophosphorylation. Its function is as follows. Testis-specific serine/threonine-protein kinase required during spermatid development. Phosphorylates 'Ser-288' of TSKS. Involved in the late stages of spermatogenesis, during the reconstruction of the cytoplasm. During spermatogenesis, required for the transformation of a ring-shaped structure around the base of the flagellum originating from the chromatoid body. In Homo sapiens (Human), this protein is Testis-specific serine/threonine-protein kinase 1 (TSSK1B).